Consider the following 479-residue polypeptide: Aldehyde dehydrogenase family 3 member B3 (479 aa).

Active-site residues include Glu-223 and Cys-257. Cys-476 carries the S-geranylgeranyl cysteine lipid modification. Positions 477–479 (TLL) are cleaved as a propeptide — removed in mature form.

Belongs to the aldehyde dehydrogenase family. Geranylgeranylation is important for membrane localization and enzyme activity. Expressed in testis, kidney, small intestine, spleen, white adipose tissue, liver and lung.

It is found in the cell membrane. The enzyme catalyses an aldehyde + NAD(+) + H2O = a carboxylate + NADH + 2 H(+). The catalysed reaction is hexadecanoate + NADH + 2 H(+) = hexadecanal + NAD(+) + H2O. It catalyses the reaction octanal + NAD(+) + H2O = octanoate + NADH + 2 H(+). Functionally, oxidizes medium and long chain aldehydes into non-toxic fatty acids. The polypeptide is Aldehyde dehydrogenase family 3 member B3 (Mus musculus (Mouse)).